Consider the following 481-residue polypeptide: Aspartyl/glutamyl-tRNA(Asn/Gln) amidotransferase subunit B (481 aa).

It belongs to the GatB/GatE family. GatB subfamily. As to quaternary structure, heterotrimer of A, B and C subunits.

The catalysed reaction is L-glutamyl-tRNA(Gln) + L-glutamine + ATP + H2O = L-glutaminyl-tRNA(Gln) + L-glutamate + ADP + phosphate + H(+). The enzyme catalyses L-aspartyl-tRNA(Asn) + L-glutamine + ATP + H2O = L-asparaginyl-tRNA(Asn) + L-glutamate + ADP + phosphate + 2 H(+). Functionally, allows the formation of correctly charged Asn-tRNA(Asn) or Gln-tRNA(Gln) through the transamidation of misacylated Asp-tRNA(Asn) or Glu-tRNA(Gln) in organisms which lack either or both of asparaginyl-tRNA or glutaminyl-tRNA synthetases. The reaction takes place in the presence of glutamine and ATP through an activated phospho-Asp-tRNA(Asn) or phospho-Glu-tRNA(Gln). The chain is Aspartyl/glutamyl-tRNA(Asn/Gln) amidotransferase subunit B from Fusobacterium nucleatum subsp. nucleatum (strain ATCC 25586 / DSM 15643 / BCRC 10681 / CIP 101130 / JCM 8532 / KCTC 2640 / LMG 13131 / VPI 4355).